Consider the following 207-residue polypeptide: Urease accessory protein UreG (207 aa).

16-23 (GPVGSGKT) lines the GTP pocket.

Belongs to the SIMIBI class G3E GTPase family. UreG subfamily. In terms of assembly, homodimer. UreD, UreF and UreG form a complex that acts as a GTP-hydrolysis-dependent molecular chaperone, activating the urease apoprotein by helping to assemble the nickel containing metallocenter of UreC. The UreE protein probably delivers the nickel.

It is found in the cytoplasm. In terms of biological role, facilitates the functional incorporation of the urease nickel metallocenter. This process requires GTP hydrolysis, probably effectuated by UreG. This Cupriavidus metallidurans (strain ATCC 43123 / DSM 2839 / NBRC 102507 / CH34) (Ralstonia metallidurans) protein is Urease accessory protein UreG.